The chain runs to 127 residues: Large ribosomal subunit protein eL8 (127 aa).

Belongs to the eukaryotic ribosomal protein eL8 family. In terms of assembly, part of the 50S ribosomal subunit. Probably part of the RNase P complex.

The protein resides in the cytoplasm. Functionally, multifunctional RNA-binding protein that recognizes the K-turn motif in ribosomal RNA, the RNA component of RNase P, box H/ACA, box C/D and box C'/D' sRNAs. In Desulfurococcus amylolyticus (strain DSM 18924 / JCM 16383 / VKM B-2413 / 1221n) (Desulfurococcus kamchatkensis), this protein is Large ribosomal subunit protein eL8.